A 415-amino-acid chain; its full sequence is uncharacterized protein (415 aa).

This is an uncharacterized protein from Rickettsia prowazekii (strain Madrid E).